Reading from the N-terminus, the 962-residue chain is Nonsense-mediated mRNA decay factor SMG8 (962 aa).

The tract at residues 634 to 661 is disordered; the sequence is RSPEISSQIASSGLSSRSNSTSSGTSSA. Residues 639 to 661 are compositionally biased toward low complexity; sequence SSQIASSGLSSRSNSTSSGTSSA.

Belongs to the SMG8 family.

Functionally, involved in nonsense-mediated decay (NMD) of mRNAs containing premature stop codons. Probable component of kinase complex containing nonC and recruited to stalled ribosomes. This chain is Nonsense-mediated mRNA decay factor SMG8, found in Drosophila virilis (Fruit fly).